The following is a 95-amino-acid chain: Aspartyl/glutamyl-tRNA(Asn/Gln) amidotransferase subunit C (95 aa).

Belongs to the GatC family. In terms of assembly, heterotrimer of A, B and C subunits.

It catalyses the reaction L-glutamyl-tRNA(Gln) + L-glutamine + ATP + H2O = L-glutaminyl-tRNA(Gln) + L-glutamate + ADP + phosphate + H(+). It carries out the reaction L-aspartyl-tRNA(Asn) + L-glutamine + ATP + H2O = L-asparaginyl-tRNA(Asn) + L-glutamate + ADP + phosphate + 2 H(+). In terms of biological role, allows the formation of correctly charged Asn-tRNA(Asn) or Gln-tRNA(Gln) through the transamidation of misacylated Asp-tRNA(Asn) or Glu-tRNA(Gln) in organisms which lack either or both of asparaginyl-tRNA or glutaminyl-tRNA synthetases. The reaction takes place in the presence of glutamine and ATP through an activated phospho-Asp-tRNA(Asn) or phospho-Glu-tRNA(Gln). In Chlorobium phaeovibrioides (strain DSM 265 / 1930) (Prosthecochloris vibrioformis (strain DSM 265)), this protein is Aspartyl/glutamyl-tRNA(Asn/Gln) amidotransferase subunit C.